Reading from the N-terminus, the 196-residue chain is Phosphoheptose isomerase (196 aa).

In terms of domain architecture, SIS spans 34–192; the sequence is MVQCLLGGNK…CEIIDTTLFP (159 aa). A substrate-binding site is contributed by 49–51; the sequence is NGG. Zn(2+)-binding residues include H58 and Q62. Substrate is bound by residues Q62, 91–92, 117–119, S122, and Q172; these read ND and STS. Zn(2+) contacts are provided by Q172 and H180.

Belongs to the SIS family. GmhA subfamily. As to quaternary structure, homotetramer. Zn(2+) serves as cofactor.

It localises to the cytoplasm. It carries out the reaction 2 D-sedoheptulose 7-phosphate = D-glycero-alpha-D-manno-heptose 7-phosphate + D-glycero-beta-D-manno-heptose 7-phosphate. The protein operates within carbohydrate biosynthesis; D-glycero-D-manno-heptose 7-phosphate biosynthesis; D-glycero-alpha-D-manno-heptose 7-phosphate and D-glycero-beta-D-manno-heptose 7-phosphate from sedoheptulose 7-phosphate: step 1/1. Catalyzes the isomerization of sedoheptulose 7-phosphate in D-glycero-D-manno-heptose 7-phosphate. The polypeptide is Phosphoheptose isomerase (Colwellia psychrerythraea (strain 34H / ATCC BAA-681) (Vibrio psychroerythus)).